Consider the following 70-residue polypeptide: Large ribosomal subunit protein uL29 (70 aa).

It belongs to the universal ribosomal protein uL29 family.

The polypeptide is Large ribosomal subunit protein uL29 (Gloeobacter violaceus (strain ATCC 29082 / PCC 7421)).